A 372-amino-acid chain; its full sequence is Envelope phospholipase OPG057 (372 aa).

Positions 153–156 (YPPL) match the YPPL motif. 2 S-palmitoyl cysteine; by host lipidation sites follow: C185 and C186. Residues 307-334 (FTIQNNTKLLIVDDEYVHITSANFDGTH) enclose the PLD phosphodiesterase domain.

The protein belongs to the orthopoxvirus OPG057 family. In terms of assembly, interacts with protein OPG190/B5. In terms of processing, palmitoylated. Attachment of the palmitate moiety is essential for correct intracellular targeting and protein function.

The protein resides in the virion membrane. It is found in the host Golgi apparatus. Its subcellular location is the host trans-Golgi network. The protein localises to the host endoplasmic reticulum membrane. The catalysed reaction is a 1,2-diacyl-sn-glycero-3-phosphocholine + H2O = a 1,2-diacyl-sn-glycero-3-phosphate + choline + H(+). In terms of biological role, major envelope protein that plays a role in the biogenesis of the viral double membrane and in egress of virus from the host cell. Produces the wrapped form of virus that is required for cell-to-cell spread. Acts as a lipase with broad specificity including phospholipase C, phospholipase A, and triacylglycerol lipase activities. This Vaccinia virus (strain Western Reserve) (VACV) protein is Envelope phospholipase OPG057 (OPG057).